A 468-amino-acid polypeptide reads, in one-letter code: Ribulose bisphosphate carboxylase large chain (468 aa).

An N6,N6,N6-trimethyllysine modification is found at K5. Positions 114 and 164 each coordinate substrate. Catalysis depends on K166, which acts as the Proton acceptor. K168 contacts substrate. K192, D194, and E195 together coordinate Mg(2+). K192 is subject to N6-carboxylysine. Catalysis depends on H285, which acts as the Proton acceptor. Residues R286, H318, and S370 each contribute to the substrate site.

Belongs to the RuBisCO large chain family. Type I subfamily. As to quaternary structure, heterohexadecamer of 8 large chains and 8 small chains; disulfide-linked. The disulfide link is formed within the large subunit homodimers. The cofactor is Mg(2+). Post-translationally, the disulfide bond which can form in the large chain dimeric partners within the hexadecamer appears to be associated with oxidative stress and protein turnover.

The protein resides in the plastid. It localises to the chloroplast. The catalysed reaction is 2 (2R)-3-phosphoglycerate + 2 H(+) = D-ribulose 1,5-bisphosphate + CO2 + H2O. It carries out the reaction D-ribulose 1,5-bisphosphate + O2 = 2-phosphoglycolate + (2R)-3-phosphoglycerate + 2 H(+). In terms of biological role, ruBisCO catalyzes two reactions: the carboxylation of D-ribulose 1,5-bisphosphate, the primary event in carbon dioxide fixation, as well as the oxidative fragmentation of the pentose substrate in the photorespiration process. Both reactions occur simultaneously and in competition at the same active site. This is Ribulose bisphosphate carboxylase large chain from Datura stramonium (Jimsonweed).